We begin with the raw amino-acid sequence, 336 residues long: Holliday junction branch migration complex subunit RuvB (336 aa).

The large ATPase domain (RuvB-L) stretch occupies residues 4–184 (ADRLISAGTT…FGIVQRLEFY (181 aa)). Residues isoleucine 23, arginine 24, glycine 65, lysine 68, threonine 69, threonine 70, 131-133 (EDY), arginine 174, tyrosine 184, and arginine 221 contribute to the ATP site. Position 69 (threonine 69) interacts with Mg(2+). Residues 185 to 255 (QVPDLQYIVS…IAAQALDMLN (71 aa)) form a small ATPAse domain (RuvB-S) region. The tract at residues 258–336 (AEGFDYMDRK…HFGITPPEMP (79 aa)) is head domain (RuvB-H). DNA contacts are provided by arginine 294, arginine 313, and arginine 318.

It belongs to the RuvB family. Homohexamer. Forms an RuvA(8)-RuvB(12)-Holliday junction (HJ) complex. HJ DNA is sandwiched between 2 RuvA tetramers; dsDNA enters through RuvA and exits via RuvB. An RuvB hexamer assembles on each DNA strand where it exits the tetramer. Each RuvB hexamer is contacted by two RuvA subunits (via domain III) on 2 adjacent RuvB subunits; this complex drives branch migration. In the full resolvosome a probable DNA-RuvA(4)-RuvB(12)-RuvC(2) complex forms which resolves the HJ.

The protein resides in the cytoplasm. The catalysed reaction is ATP + H2O = ADP + phosphate + H(+). The RuvA-RuvB-RuvC complex processes Holliday junction (HJ) DNA during genetic recombination and DNA repair, while the RuvA-RuvB complex plays an important role in the rescue of blocked DNA replication forks via replication fork reversal (RFR). RuvA specifically binds to HJ cruciform DNA, conferring on it an open structure. The RuvB hexamer acts as an ATP-dependent pump, pulling dsDNA into and through the RuvAB complex. RuvB forms 2 homohexamers on either side of HJ DNA bound by 1 or 2 RuvA tetramers; 4 subunits per hexamer contact DNA at a time. Coordinated motions by a converter formed by DNA-disengaged RuvB subunits stimulates ATP hydrolysis and nucleotide exchange. Immobilization of the converter enables RuvB to convert the ATP-contained energy into a lever motion, pulling 2 nucleotides of DNA out of the RuvA tetramer per ATP hydrolyzed, thus driving DNA branch migration. The RuvB motors rotate together with the DNA substrate, which together with the progressing nucleotide cycle form the mechanistic basis for DNA recombination by continuous HJ branch migration. Branch migration allows RuvC to scan DNA until it finds its consensus sequence, where it cleaves and resolves cruciform DNA. The sequence is that of Holliday junction branch migration complex subunit RuvB from Shigella sonnei (strain Ss046).